A 156-amino-acid chain; its full sequence is uncharacterized protein (156 aa).

The next 5 helical transmembrane spans lie at 6–26 (LIVL…PYFA), 34–54 (FWKF…HQMP), 68–88 (CARC…YPFI), 100–120 (WYLI…LIGL), and 129–149 (FITG…IFFE).

It is found in the cell membrane. This is an uncharacterized protein from Methanocaldococcus jannaschii (strain ATCC 43067 / DSM 2661 / JAL-1 / JCM 10045 / NBRC 100440) (Methanococcus jannaschii).